The sequence spans 255 residues: Tabinhibitin 2 (255 aa).

The N-terminal stretch at Met1 to Ala23 is a signal peptide. A Cell attachment site motif is present at residues Arg32–Asp34. The SCP domain maps to Leu67–Phe211.

It belongs to the CRISP family. As to expression, expressed in salivary glands.

The protein localises to the secreted. Functionally, inhibits platelet aggregation induced by all agonists tested (ADP, arachidonic acid, the thromboxane A2 analog U46619, thrombin, and snake venom snaclecs (TMVA that activates platelet through GPIB, and stejnulxin that specifically acts through GPVI (GP6))). May act by competing with fibrinogen for binding to glycoprotein IIb/IIIa (ITGA2B/ITGB3). The protein is Tabinhibitin 2 of Tabanus yao (Horsefly).